The sequence spans 230 residues: MSERAPVVTIDGPSGAGKGTISQLLAKHLGWQLLDSGAIYRVLALAAIHHDVELENEESITLLAAHLDVKFLTGNEKDPVQVILEGEDVTTAIRTQECSNAASKVAAFPRVREALLRRQRAFRAAPGLIADGRDMGTVVFPTASAKLYLTASAEERAQRRYNQLQDKGFDVNIERLLAEIIERDDRDMNRPVAPLVPAEDALVIDTSDKGIDEVLELALNYINQKLSIAN.

Residue 12 to 20 participates in ATP binding; that stretch reads GPSGAGKGT.

It belongs to the cytidylate kinase family. Type 1 subfamily.

Its subcellular location is the cytoplasm. It carries out the reaction CMP + ATP = CDP + ADP. It catalyses the reaction dCMP + ATP = dCDP + ADP. The polypeptide is Cytidylate kinase (Shewanella sp. (strain MR-7)).